A 1513-amino-acid polypeptide reads, in one-letter code: Protein tincar (1513 aa).

Residues 1–77 (MGGKHQGSGA…DSGSYLHLNS (77 aa)) are Cytoplasmic-facing. Residues 78-98 (LWSIWYGVMLTLFQGYLAMHG) traverse the membrane as a helical segment. The Extracellular segment spans residues 99–120 (AYRFLGCSLIPWKIEPVAELNL). The helical transmembrane segment at 121–141 (QIVLSGVVFILLPVFFTSAVF) threads the bilayer. Residues 142-181 (KVGNLANDGIKLATGARERRCTLSPHDGLEEESRGGTLRA) are Cytoplasmic-facing. The chain crosses the membrane as a helical span at residues 182–202 (LWTHGGPTAAFVHIVIALCLL). Topologically, residues 203–668 (LPRLLLEARI…VAIFSQPPSA (466 aa)) are extracellular. Disordered regions lie at residues 247-266 (TPFP…HQHG), 354-373 (ERQE…DEGV), and 383-532 (MPDF…SIHR). A compositionally biased stretch (low complexity) spans 427–466 (ASSSSSSTTSTTTTTTTSTTTTAATTTSTRGTSTTTTTTT). The segment covering 478–507 (SAHHHHGKSRKHHKHHNKQRQQQPPRRHHV) has biased composition (basic residues). Over residues 523-532 (TTTRDSSIHR) the composition is skewed to basic and acidic residues. The chain crosses the membrane as a helical span at residues 669–689 (EFVNLLCALLVWSVRYPAVFW). The Cytoplasmic segment spans residues 690–696 (NTSKAFA). Residues 697–717 (CVFSLQMVVAALDIILGYVGI) form a helical membrane-spanning segment. Residues 718-736 (SNLYKLQIYAEAMPVHQPG) are Extracellular-facing. The chain crosses the membrane as a helical span at residues 737–757 (LILNAVVTLALYLLSTALVLA). Residues 758-787 (SSMVMYLYGHGRLATRMRDRSIITLKTHQT) are Cytoplasmic-facing. A helical membrane pass occupies residues 788–808 (WIYFAHCASLCFVLALAVVKA). Residues 809–826 (PLLNDLSATYKNNLHCPT) lie on the Extracellular side of the membrane. Residues 827-847 (FLAALVGVTHLLLWIVIWLCL) traverse the membrane as a helical segment. The Cytoplasmic segment spans residues 848–1513 (TIKRRWHFKL…CGLYVTAQLH (666 aa)). Low complexity-rich tracts occupy residues 879 to 903 (SSGQ…VNGG) and 1060 to 1071 (QQQQQQQQQQRQ). Disordered regions lie at residues 879–913 (SSGQ…MSTA), 1045–1090 (EYDE…SGLG), 1115–1155 (ASTS…HSAG), 1173–1214 (EHHH…PHQH), and 1231–1335 (AHIA…DPAA). Positions 1122–1149 (PPQPSAQAPPPPPPLPIKGAPVPQPPAV) are enriched in pro residues. Composition is skewed to low complexity over residues 1179 to 1208 (LQHS…LQQQ) and 1255 to 1285 (TPRS…SGVH). Residues 1286-1296 (SGEERELEVII) show a composition bias toward basic and acidic residues. Residues 1303–1314 (KPPPRPPQPPIQ) show a composition bias toward pro residues. Positions 1324 to 1335 (MRMSSFNADPAA) are enriched in polar residues.

As to expression, expression varies in tissues throughout development. At stage 5, expressed in the embryo dorsal region followed by expression in a striped pattern at stage 6. During gastrulation, expressed in ventral region and ventral nerve cord. Also detected in many neurons in the externa sensilla and chordotonal organ. At stage 16, expressed on the surface of the midgut. Additionally, expressed in a subset of cardioblasts (Tin+ subpopulation) during dorsal vessel formation. In third-instar larval tissues, expressed in the eye and antennal disks. In the antennal disks, expressed in the second antennal segments. In the eye disks, strongest expression found in the ocelli, and in the differentiating ommatidial cells. Also expressed in all cells within and in the vicinity of the morphogenetic furrow.

It is found in the membrane. Its function is as follows. Involved in eye morphogenesis. May be essential for the normal differentiation of ommatidial cells. This chain is Protein tincar (tinc), found in Drosophila melanogaster (Fruit fly).